Consider the following 481-residue polypeptide: Phenylalanine--tRNA ligase alpha subunit (481 aa).

L-phenylalanine contacts are provided by residues threonine 322, 361-363, and tyrosine 401; that span reads QLE. Residue glutamate 403 participates in Mg(2+) binding. L-phenylalanine is bound at residue phenylalanine 426.

The protein belongs to the class-II aminoacyl-tRNA synthetase family. Phe-tRNA synthetase alpha subunit type 2 subfamily. Tetramer of two alpha and two beta subunits. The cofactor is Mg(2+).

The protein localises to the cytoplasm. It catalyses the reaction tRNA(Phe) + L-phenylalanine + ATP = L-phenylalanyl-tRNA(Phe) + AMP + diphosphate + H(+). This chain is Phenylalanine--tRNA ligase alpha subunit, found in Methanoculleus marisnigri (strain ATCC 35101 / DSM 1498 / JR1).